The sequence spans 365 residues: UDP-N-acetylglucosamine--N-acetylmuramyl-(pentapeptide) pyrophosphoryl-undecaprenol N-acetylglucosamine transferase (365 aa).

UDP-N-acetyl-alpha-D-glucosamine-binding positions include 11–13 (TGG), Asn124, Arg165, Ser192, Ile246, and Gln291.

The protein belongs to the glycosyltransferase 28 family. MurG subfamily.

It localises to the cell inner membrane. It carries out the reaction di-trans,octa-cis-undecaprenyl diphospho-N-acetyl-alpha-D-muramoyl-L-alanyl-D-glutamyl-meso-2,6-diaminopimeloyl-D-alanyl-D-alanine + UDP-N-acetyl-alpha-D-glucosamine = di-trans,octa-cis-undecaprenyl diphospho-[N-acetyl-alpha-D-glucosaminyl-(1-&gt;4)]-N-acetyl-alpha-D-muramoyl-L-alanyl-D-glutamyl-meso-2,6-diaminopimeloyl-D-alanyl-D-alanine + UDP + H(+). It functions in the pathway cell wall biogenesis; peptidoglycan biosynthesis. Cell wall formation. Catalyzes the transfer of a GlcNAc subunit on undecaprenyl-pyrophosphoryl-MurNAc-pentapeptide (lipid intermediate I) to form undecaprenyl-pyrophosphoryl-MurNAc-(pentapeptide)GlcNAc (lipid intermediate II). This Nitratidesulfovibrio vulgaris (strain DP4) (Desulfovibrio vulgaris) protein is UDP-N-acetylglucosamine--N-acetylmuramyl-(pentapeptide) pyrophosphoryl-undecaprenol N-acetylglucosamine transferase.